We begin with the raw amino-acid sequence, 930 residues long: Translation initiation factor IF-2 (930 aa).

Residues 50–67 show a composition bias toward low complexity; it reads FKPAAAPKVEAKPAAPKV. Disordered regions lie at residues 50 to 195 and 260 to 346; these read FKPA…PRID and EVVP…HELP. Basic and acidic residues-rich tracts occupy residues 68–90 and 110–125; these read SAEK…EAKP and FKAE…AERR. Positions 129-141 are enriched in low complexity; it reads KGNNRDQQQNGNR. Basic and acidic residues-rich tracts occupy residues 157–167 and 262–295; these read RDNRRFNDQAK and VPEK…DGPR. The span at 309–318 shows a compositional bias: low complexity; it reads NQKNSNWNNN. The span at 337–346 shows a compositional bias: basic and acidic residues; the sequence is VTERKFHELP. In terms of domain architecture, tr-type G spans 432 to 599; it reads ERPPVVTIMG…TVLLVAEIQE (168 aa). Residues 441-448 form a G1 region; sequence GHVDHGKT. Residue 441-448 participates in GTP binding; that stretch reads GHVDHGKT. Residues 466–470 form a G2 region; sequence GITQH. Residues 487–490 form a G3 region; it reads DTPG. Residues 487–491 and 541–544 each bind GTP; these read DTPGH and NKID. Residues 541 to 544 are G4; the sequence is NKID. A G5 region spans residues 577-579; the sequence is SAK.

It belongs to the TRAFAC class translation factor GTPase superfamily. Classic translation factor GTPase family. IF-2 subfamily.

It is found in the cytoplasm. In terms of biological role, one of the essential components for the initiation of protein synthesis. Protects formylmethionyl-tRNA from spontaneous hydrolysis and promotes its binding to the 30S ribosomal subunits. Also involved in the hydrolysis of GTP during the formation of the 70S ribosomal complex. The chain is Translation initiation factor IF-2 from Streptococcus pneumoniae (strain ATCC BAA-255 / R6).